We begin with the raw amino-acid sequence, 188 residues long: Protein GrpE 2 (188 aa).

It belongs to the GrpE family. In terms of assembly, homodimer.

The protein localises to the cytoplasm. Participates actively in the response to hyperosmotic and heat shock by preventing the aggregation of stress-denatured proteins, in association with DnaK and GrpE. It is the nucleotide exchange factor for DnaK and may function as a thermosensor. Unfolded proteins bind initially to DnaJ; upon interaction with the DnaJ-bound protein, DnaK hydrolyzes its bound ATP, resulting in the formation of a stable complex. GrpE releases ADP from DnaK; ATP binding to DnaK triggers the release of the substrate protein, thus completing the reaction cycle. Several rounds of ATP-dependent interactions between DnaJ, DnaK and GrpE are required for fully efficient folding. This Buchnera aphidicola subsp. Acyrthosiphon pisum (strain APS) (Acyrthosiphon pisum symbiotic bacterium) protein is Protein GrpE 2.